A 309-amino-acid polypeptide reads, in one-letter code: Lipoyl synthase (309 aa).

Positions 56, 61, 67, 82, 86, 89, and 296 each coordinate [4Fe-4S] cluster. Residues 68–285 (FKRGTATFMI…RVAGLKMGFS (218 aa)) enclose the Radical SAM core domain.

It belongs to the radical SAM superfamily. Lipoyl synthase family. Requires [4Fe-4S] cluster as cofactor.

The protein resides in the cytoplasm. It carries out the reaction [[Fe-S] cluster scaffold protein carrying a second [4Fe-4S](2+) cluster] + N(6)-octanoyl-L-lysyl-[protein] + 2 oxidized [2Fe-2S]-[ferredoxin] + 2 S-adenosyl-L-methionine + 4 H(+) = [[Fe-S] cluster scaffold protein] + N(6)-[(R)-dihydrolipoyl]-L-lysyl-[protein] + 4 Fe(3+) + 2 hydrogen sulfide + 2 5'-deoxyadenosine + 2 L-methionine + 2 reduced [2Fe-2S]-[ferredoxin]. Its pathway is protein modification; protein lipoylation via endogenous pathway; protein N(6)-(lipoyl)lysine from octanoyl-[acyl-carrier-protein]: step 2/2. In terms of biological role, catalyzes the radical-mediated insertion of two sulfur atoms into the C-6 and C-8 positions of the octanoyl moiety bound to the lipoyl domains of lipoate-dependent enzymes, thereby converting the octanoylated domains into lipoylated derivatives. The chain is Lipoyl synthase from Syntrophotalea carbinolica (strain DSM 2380 / NBRC 103641 / GraBd1) (Pelobacter carbinolicus).